The chain runs to 153 residues: Membrane-spanning 4-domains subfamily A member 13 (153 aa).

4 helical membrane passes run 1-21, 36-56, 71-91, and 111-131; these read MTGI…MGQI, GCSL…RATW, ILCM…LSTF, and VLLS…IFGC.

Belongs to the MS4A family.

The protein resides in the membrane. May be involved in signal transduction as a component of a multimeric receptor complex. This chain is Membrane-spanning 4-domains subfamily A member 13 (MS4A13), found in Bos taurus (Bovine).